A 470-amino-acid chain; its full sequence is Macrophage metalloelastase (470 aa).

Positions 1–16 (MKFLLILLLQATASGA) are cleaved as a signal peptide. Residues 17-105 (LPLNSSTSLE…DVHHFREMPG (89 aa)) constitute a propeptide, activation peptide. A glycan (N-linked (GlcNAc...) asparagine) is linked at Asn-20. Positions 90–97 (PRCGVPDV) match the Cysteine switch motif. Cys-92 provides a ligand contact to Zn(2+). Positions 124 and 158 each coordinate Ca(2+). Residues His-168 and Asp-170 each contribute to the Zn(2+) site. The Ca(2+) site is built by Asp-175, Gly-176, Gly-178, and Ile-180. His-183 is a Zn(2+) binding site. Ca(2+)-binding residues include Gly-190, Gly-192, and Asp-194. His-196 provides a ligand contact to Zn(2+). Asp-198, Glu-199, and Glu-201 together coordinate Ca(2+). Zn(2+) is bound at residue His-218. Glu-219 is a catalytic residue. Residues His-222 and His-228 each coordinate Zn(2+). 4 Hemopexin repeats span residues 279–328 (PALC…WPTL), 329–375 (PSGI…GFPN), 377–425 (VKKI…FQGI), and 426–470 (GPKI…WFGC). Cysteines 282 and 470 form a disulfide. The N-linked (GlcNAc...) asparagine glycan is linked to Asn-285. The Ca(2+) site is built by Asp-289, Glu-333, Asp-381, and Asp-430.

Belongs to the peptidase M10A family. It depends on Ca(2+) as a cofactor. Zn(2+) is required as a cofactor. In terms of tissue distribution, found in alveolar macrophages but not in peripheral blood monocytes.

It is found in the secreted. It localises to the extracellular space. The protein resides in the extracellular matrix. The catalysed reaction is Hydrolysis of soluble and insoluble elastin. Specific cleavages are also produced at 14-Ala-|-Leu-15 and 16-Tyr-|-Leu-17 in the B chain of insulin.. In terms of biological role, may be involved in tissue injury and remodeling. Has significant elastolytic activity. Can accept large and small amino acids at the P1' site, but has a preference for leucine. Aromatic or hydrophobic residues are preferred at the P1 site, with small hydrophobic residues (preferably alanine) occupying P3. The sequence is that of Macrophage metalloelastase (MMP12) from Homo sapiens (Human).